We begin with the raw amino-acid sequence, 377 residues long: Nitric oxide reductase FlRd-NAD(+) reductase (377 aa).

It belongs to the FAD-dependent oxidoreductase family. It depends on FAD as a cofactor.

Its subcellular location is the cytoplasm. It carries out the reaction 2 reduced [nitric oxide reductase rubredoxin domain] + NAD(+) + H(+) = 2 oxidized [nitric oxide reductase rubredoxin domain] + NADH. It functions in the pathway nitrogen metabolism; nitric oxide reduction. Its function is as follows. One of at least two accessory proteins for anaerobic nitric oxide (NO) reductase. Reduces the rubredoxin moiety of NO reductase. The chain is Nitric oxide reductase FlRd-NAD(+) reductase from Salmonella gallinarum (strain 287/91 / NCTC 13346).